Reading from the N-terminus, the 286-residue chain is ATP synthase gamma chain (286 aa).

It belongs to the ATPase gamma chain family. As to quaternary structure, F-type ATPases have 2 components, CF(1) - the catalytic core - and CF(0) - the membrane proton channel. CF(1) has five subunits: alpha(3), beta(3), gamma(1), delta(1), epsilon(1). CF(0) has three main subunits: a, b and c.

The protein resides in the cell inner membrane. In terms of biological role, produces ATP from ADP in the presence of a proton gradient across the membrane. The gamma chain is believed to be important in regulating ATPase activity and the flow of protons through the CF(0) complex. The chain is ATP synthase gamma chain from Shewanella piezotolerans (strain WP3 / JCM 13877).